A 284-amino-acid polypeptide reads, in one-letter code: Nucleotide-binding protein VSAL_I0495 (284 aa).

8–15 (GNSGAGKS) contacts ATP. 56 to 59 (DIRN) is a binding site for GTP.

Belongs to the RapZ-like family.

Its function is as follows. Displays ATPase and GTPase activities. This is Nucleotide-binding protein VSAL_I0495 from Aliivibrio salmonicida (strain LFI1238) (Vibrio salmonicida (strain LFI1238)).